We begin with the raw amino-acid sequence, 379 residues long: Cytochrome b (379 aa).

4 helical membrane-spanning segments follow: residues 33-53 (FGSL…FLAM), 77-98 (WLIR…YLHI), 113-133 (WNIG…GYVL), and 178-198 (FFAF…IHLL). Heme b-binding residues include H83 and H97. Residues H182 and H196 each coordinate heme b. H201 lines the a ubiquinone pocket. Transmembrane regions (helical) follow at residues 226–246 (YKDL…ALFY), 288–308 (LGGV…PILH), 320–340 (ASQL…WIGG), and 347–367 (YIII…VLNP).

The protein belongs to the cytochrome b family. As to quaternary structure, the cytochrome bc1 complex contains 3 respiratory subunits (MT-CYB, CYC1 and UQCRFS1), 2 core proteins (UQCRC1 and UQCRC2) and probably 6 low-molecular weight proteins. Heme b serves as cofactor.

It localises to the mitochondrion inner membrane. Its function is as follows. Component of the ubiquinol-cytochrome c reductase complex (complex III or cytochrome b-c1 complex) that is part of the mitochondrial respiratory chain. The b-c1 complex mediates electron transfer from ubiquinol to cytochrome c. Contributes to the generation of a proton gradient across the mitochondrial membrane that is then used for ATP synthesis. The sequence is that of Cytochrome b (mt-cyb) from Anguilla dieffenbachii (New Zealand longfin eel).